We begin with the raw amino-acid sequence, 263 residues long: LIM and SH3 domain protein 1 (263 aa).

At Met-1 the chain carries N-acetylmethionine. The 61-residue stretch at 3-63 (PNCARCGKIV…NAHYPKQSFT (61 aa)) folds into the LIM zinc-binding domain. Lys-42 is subject to N6-acetyllysine. Nebulin repeat units follow at residues 64–95 (MVAD…KNKG) and 97–131 (GFSV…KSRM). Thr-68 carries the post-translational modification Phosphothreonine. Lys-75 carries the post-translational modification N6-methyllysine. At Ser-99 the chain carries Phosphoserine. Thr-104 bears the Phosphothreonine mark. Lys-112 carries the N6-succinyllysine modification. 2 positions are modified to phosphoserine: Ser-118 and Ser-134. Residues 122-207 (YHEEFEKSRM…QRSAPGGGGK (86 aa)) are disordered. Residues 148 to 162 (DSSSYRRPTEQQQPQ) are compositionally biased toward polar residues. Residues 204–263 (GGGKRYRAVYDYSAADEDEVSFQDGDTIVNVQQIDDGWMYGTVERTGDTGMLPANYVEAI) enclose the SH3 domain.

As to quaternary structure, interacts with F-actin. Interacts with ANKRD54. Interacts with KBTBD10. Post-translationally, phosphorylated. Expressed in a wide range of tissues (but not the heart or skeletal muscle), the expression is specific for certain actin-rich cell types within these tissues. Expression is prominent in the cortical regions of ion-transporting duct cells in the pancreas, in the salivary parotid gland and in certain F-actin-rich cells in the distal tubule/collecting duct. In primary cultures of gastric fibroblasts, expression is mainly within the tips of lamellipodia and at the leading edges of membrane ruffles.

Its subcellular location is the cytoplasm. The protein resides in the cell cortex. It is found in the cytoskeleton. Plays an important role in the regulation of dynamic actin-based, cytoskeletal activities. Agonist-dependent changes in LASP1 phosphorylation may also serve to regulate actin-associated ion transport activities, not only in the parietal cell but also in certain other F-actin-rich secretory epithelial cell types. The protein is LIM and SH3 domain protein 1 of Rattus norvegicus (Rat).